The chain runs to 269 residues: UPF0329 protein ECU04_1660 (269 aa).

Positions Met1–Ser12 are enriched in basic and acidic residues. Residues Met1 to Glu74 are disordered. Residues Lys13–Lys23 show a composition bias toward basic residues. The segment covering Gly24–Asp36 has biased composition (basic and acidic residues). Residues Arg37–Val51 show a composition bias toward acidic residues.

Belongs to the UPF0329 family.

This Encephalitozoon cuniculi (strain GB-M1) (Microsporidian parasite) protein is UPF0329 protein ECU04_1660.